The following is a 321-amino-acid chain: tRNA uridine(34) hydroxylase (321 aa).

The Rhodanese domain maps to 123–217 (SDPDVTVIDT…YLEEVPEGNS (95 aa)). Cys177 functions as the Cysteine persulfide intermediate in the catalytic mechanism. Basic and acidic residues predominate over residues 294–308 (RKGELHIGDRADIAK). Residues 294-321 (RKGELHIGDRADIAKSRTTQGAPSADGE) form a disordered region.

The protein belongs to the TrhO family.

It carries out the reaction uridine(34) in tRNA + AH2 + O2 = 5-hydroxyuridine(34) in tRNA + A + H2O. Its function is as follows. Catalyzes oxygen-dependent 5-hydroxyuridine (ho5U) modification at position 34 in tRNAs. The protein is tRNA uridine(34) hydroxylase of Teredinibacter turnerae (strain ATCC 39867 / T7901).